Here is a 681-residue protein sequence, read N- to C-terminus: Phosphomethylpyrimidine synthase (681 aa).

The segment covering 1–13 (MSNNTTSLPAENS) has biased composition (polar residues). The disordered stretch occupies residues 1 to 29 (MSNNTTSLPAENSSHPRKGTPIRKKQREE). The segment covering 15–25 (HPRKGTPIRKK) has biased composition (basic residues). Substrate contacts are provided by residues N254, M283, Y312, H348, 368–370 (SRG), 409–412 (DGLR), and E448. H452 contacts Zn(2+). Y475 serves as a coordination point for substrate. H516 provides a ligand contact to Zn(2+). [4Fe-4S] cluster-binding residues include C596, C599, and C604. Over residues 658–667 (FRSRGSELYH) the composition is skewed to basic and acidic residues. The interval 658–681 (FRSRGSELYHRPANLSAEANNEPT) is disordered.

This sequence belongs to the ThiC family. Homodimer. [4Fe-4S] cluster is required as a cofactor.

The enzyme catalyses 5-amino-1-(5-phospho-beta-D-ribosyl)imidazole + S-adenosyl-L-methionine = 4-amino-2-methyl-5-(phosphooxymethyl)pyrimidine + CO + 5'-deoxyadenosine + formate + L-methionine + 3 H(+). It functions in the pathway cofactor biosynthesis; thiamine diphosphate biosynthesis. Catalyzes the synthesis of the hydroxymethylpyrimidine phosphate (HMP-P) moiety of thiamine from aminoimidazole ribotide (AIR) in a radical S-adenosyl-L-methionine (SAM)-dependent reaction. The protein is Phosphomethylpyrimidine synthase of Yersinia pseudotuberculosis serotype I (strain IP32953).